Here is a 504-residue protein sequence, read N- to C-terminus: MLGRQVTMLLKVIVAVAVLFVWHRSRDSSRGDGSNGDGLSDSSGNGFRLEHIWAYDPEDVVSSCVDVSEEMRVSADEYVSMESGSEFVESWWAKTGARPFSHVFDLRSRSMDIQRLQDRDPVSMEKYIDFSLENPELARTIELEWETAKIQVPDVRNRNTVLALALMSSNAYVRTPYTGDWRNLSSSWGHTGEEKFGWDKDGLRGHIFVNKITKVVVIAIKGTSSQGLFGSGEEDTITNDKINDNLLFSCCCARISYLWTTVCDCYMKSYTCDENCVEAELKRKDRYYAATLKLYKQVTEMYPDSAIWLTGHSLGGALAALLGRTYGVPAVTFEAPGELLPAKRLHLPLPPGLPDYEEAIWHFGHNADPIFMGTCNGASSSCSIGGYAMETACHSGQYCMYDVVNDKGWRVNLLNHRIHRVIDEVILEYGRPAKCQRAPTCIDCYNWKFVNKRRNRREESSSSIASSSQLTSSHSESETLTSTDAPEKTCIGRNWLGICTDYGV.

Residue M1 is a topological domain, cytoplasmic. The chain crosses the membrane as a helical; Signal-anchor for type II membrane protein span at residues 2–22 (LGRQVTMLLKVIVAVAVLFVW). At 23–504 (HRSRDSSRGD…WLGICTDYGV (482 aa)) the chain is on the lumenal side. Residue N183 is glycosylated (N-linked (GlcNAc...) asparagine). S313 serves as the catalytic Charge relay system. The segment at 458–484 (EESSSSIASSSQLTSSHSESETLTSTD) is disordered. Over residues 461 to 483 (SSSIASSSQLTSSHSESETLTST) the composition is skewed to low complexity.

This sequence belongs to the AB hydrolase superfamily. Lipase family. As to quaternary structure, binds to both phosphatidylinositol (PI) and phosphatidylinositol 3,5-bisphosphate (PIP2).

It localises to the endosome. It is found in the multivesicular body membrane. The protein localises to the prevacuolar compartment membrane. It catalyses the reaction a triacylglycerol + H2O = a diacylglycerol + a fatty acid + H(+). In terms of biological role, lipase which is essential for lysis of subvacuolar cytoplasm to vacuole targeted bodies and intravacuolar autophagic bodies. Involved in the lysis of intravacuolar multivesicular body (MVB) vesicles. The intravacuolar membrane disintegration by ATG15 is critical to life span extension. This is Putative lipase ATG15 (ATG15) from Candida glabrata (strain ATCC 2001 / BCRC 20586 / JCM 3761 / NBRC 0622 / NRRL Y-65 / CBS 138) (Yeast).